Consider the following 152-residue polypeptide: Nucleoside diphosphate kinase A (152 aa).

4 residues coordinate ATP: Lys12, Phe60, Arg88, and Thr94. Residue Lys100 forms a Glycyl lysine isopeptide (Lys-Gly) (interchain with G-Cter in ubiquitin) linkage. Arg105 and Asn115 together coordinate ATP. Residue His118 is the Pros-phosphohistidine intermediate of the active site. Phosphoserine occurs at positions 120, 122, and 125.

This sequence belongs to the NDK family. As to quaternary structure, hexamer of two different chains: An and B (A6, A5B, A4B2, A3B3, A2B4, AB5, B6). Interacts with PRUNE1. Component of the SET complex, composed of at least ANP32A, APEX1, HMGB2, NME1, SET and TREX1. Within this complex, interacts directly with SET. Also interacts with TREX1, but only following translocation to the nucleus. Requires Mg(2+) as cofactor.

It localises to the cytoplasm. It is found in the nucleus. It carries out the reaction a 2'-deoxyribonucleoside 5'-diphosphate + ATP = a 2'-deoxyribonucleoside 5'-triphosphate + ADP. The enzyme catalyses a ribonucleoside 5'-diphosphate + ATP = a ribonucleoside 5'-triphosphate + ADP. Its activity is regulated as follows. Autophosphorylation at His-118 increases serine/threonine protein kinase activity of the enzyme. Interaction with the SET complex inhibits exonuclease activity. Its function is as follows. Major role in the synthesis of nucleoside triphosphates other than ATP. The ATP gamma phosphate is transferred to the NDP beta phosphate via a ping-pong mechanism, using a phosphorylated active-site intermediate. Possesses nucleoside-diphosphate kinase, serine/threonine-specific protein kinase, geranyl and farnesyl pyrophosphate kinase, histidine protein kinase and 3'-5' exonuclease activities. Involved in cell proliferation, differentiation and development, signal transduction, G protein-coupled receptor endocytosis, and gene expression. Required for neural development including neural patterning and cell fate determination. During GZMA-mediated cell death, works in concert with TREX1. NME1 nicks one strand of DNA and TREX1 removes bases from the free 3' end to enhance DNA damage and prevent DNA end reannealing and rapid repair. This chain is Nucleoside diphosphate kinase A (NME1), found in Canis lupus familiaris (Dog).